A 143-amino-acid polypeptide reads, in one-letter code: Interleukin-3 (143 aa).

Positions M1–G23 are cleaved as a signal peptide. N79 carries an N-linked (GlcNAc...) asparagine glycan.

Belongs to the IL-3 family. In terms of assembly, monomer.

It is found in the secreted. Functionally, granulocyte/macrophage colony-stimulating factors are cytokines that act in hematopoiesis by controlling the production, differentiation, and function of 2 related white cell populations of the blood, the granulocytes and the monocytes-macrophages. This CSF induces granulocytes, macrophages, mast cells, stem cells, erythroid cells, eosinophils and megakaryocytes. The polypeptide is Interleukin-3 (IL3) (Canis lupus familiaris (Dog)).